The chain runs to 278 residues: Putative B3 domain-containing protein At2g21920 (278 aa).

Residues 168 to 275 constitute a DNA-binding region (TF-B3); the sequence is ISKTLSRTDV…KFIILNFEYN (108 aa).

The protein resides in the nucleus. This is Putative B3 domain-containing protein At2g21920 from Arabidopsis thaliana (Mouse-ear cress).